Here is an 833-residue protein sequence, read N- to C-terminus: MTFYDHTAIEPKWQAFWADNHTFKTGTDASKPKFYALDMFPYPSGAGLHVGHPEGYTATDILSRFKRAQGHNVLHPMGWDAFGLPAEQYAMDTGNDPAEFTAENIANFKRQINALGFSYDWDREVNTTDPNYYKWTQWIFTKLYEKGLAYEAEVPVNWVEELGTAIANEEVLPDGTSERGGYPVVRKPMRQWMLKITAYAERLLEDLEEVDWPESIKDMQRNWIGKSTGANVTFKVKDTDKDFTVFTTRPDTLFGATYAVLAPEHALVDAITTSDQAEAVADYKRQASLKSDLARTDLAKEKTGVWTGSYAINPVNGKEMPVWIADYVLASYGTGAIMAVPAHDERDWEFAKQFNLDIIPVLEGGNVEEAAFTEDGLHINSDFLDGLDKASAIAKMVEWLEAEGVGNENVTYRLRDWLFSRQRYWGEPIPIIHWEDGTSTAVPESELPLVLPVTKDIRPSGTGESPLANVTDWLEVTREDGVKGRRETNTMPQWAGSSWYYLRYIDPHNTEKLADEELLKQWLPVDIYVGGAEHAVLHLLYARFWHKVLYDLGVVPTKEPFQKLFNQGMILGTSYRDSRGALVATDKVEKRDGSFFHVETGEELEQAPAKMSKSLKNVVNPDDVVEQYGADTLRVYEMFMGPLDASIAWSEEGLEGSRKFLDRVYRLITTKEITEENSGALDKVYNETVKAVTEQVDQMKFNTAIAQLMVFVNAANKEDKLFSDYAKGFVQLIAPFAPHLGEELWQALTASGESISYVPWPSYDESKLVENDVEIVVQIKGKVKAKLVVAKDLSREELQEVALANEKVQAEIAGKDIIKVIAVPNKLVNIVIK.

Residues 41–52 carry the 'HIGH' region motif; it reads PYPSGAGLHVGH. The short motif at 610 to 614 is the 'KMSKS' region element; that stretch reads KMSKS. K613 contributes to the ATP binding site.

This sequence belongs to the class-I aminoacyl-tRNA synthetase family.

The protein localises to the cytoplasm. It catalyses the reaction tRNA(Leu) + L-leucine + ATP = L-leucyl-tRNA(Leu) + AMP + diphosphate. The chain is Leucine--tRNA ligase from Streptococcus pyogenes serotype M12 (strain MGAS2096).